A 582-amino-acid chain; its full sequence is SUMO-activating enzyme subunit uba-2 (582 aa).

Residues 20–25 (GAGGIG), D44, 52–55 (NLNR), K68, 91–92 (SI), and 113–118 (DNRAAR) contribute to the ATP site. Zn(2+) contacts are provided by C154 and C157. Catalysis depends on C170, which acts as the Glycyl thioester intermediate. Acidic residues predominate over residues 204-214 (SPDMDAVDPDN). Positions 204-235 (SPDMDAVDPDNTEAVTTEKEKEAMKEEPAPVG) are disordered. Residues 219–231 (TTEKEKEAMKEEP) are compositionally biased toward basic and acidic residues. Zn(2+)-binding residues include C431 and C434. Positions 531-570 (FEVARSEKEPEPDDRKRKADGSEEPEAKRQKVEEKDDKNG) are enriched in basic and acidic residues. The segment at 531–582 (FEVARSEKEPEPDDRKRKADGSEEPEAKRQKVEEKDDKNGNEAVAEITETMA) is disordered.

Belongs to the ubiquitin-activating E1 family. As to quaternary structure, heterodimer with aos-1.

It functions in the pathway protein modification; protein sumoylation. Its function is as follows. The dimeric enzyme acts as an E1 ligase for smo-1. It mediates ATP-dependent activation of smo-1 and formation of a thioester with a conserved cysteine residue on uba-2. In Caenorhabditis elegans, this protein is SUMO-activating enzyme subunit uba-2 (uba-2).